We begin with the raw amino-acid sequence, 354 residues long: Putative cinnamyl alcohol dehydrogenase 4 (354 aa).

The Zn(2+) site is built by C47, H69, E70, C100, C103, C106, C114, and C163. Residues T167, 188–193, 211–216, T251, and 297–299 contribute to the NADP(+) site; these read GLGGLG, STSESK, and SVT.

This sequence belongs to the zinc-containing alcohol dehydrogenase family. Homodimer. Zn(2+) is required as a cofactor.

It catalyses the reaction (E)-cinnamyl alcohol + NADP(+) = (E)-cinnamaldehyde + NADPH + H(+). It carries out the reaction (E)-coniferol + NADP(+) = (E)-coniferaldehyde + NADPH + H(+). The enzyme catalyses (E)-sinapyl alcohol + NADP(+) = (E)-sinapaldehyde + NADPH + H(+). The catalysed reaction is (E)-4-coumaroyl alcohol + NADP(+) = (E)-4-coumaraldehyde + NADPH + H(+). It catalyses the reaction (E)-caffeyl alcohol + NADP(+) = (E)-caffeyl aldehyde + NADPH + H(+). The protein operates within aromatic compound metabolism; phenylpropanoid biosynthesis. Involved in lignin biosynthesis. Catalyzes the final step specific for the production of lignin monomers. Catalyzes the NADPH-dependent reduction of coniferaldehyde, 5-hydroxyconiferaldehyde, sinapaldehyde, 4-coumaraldehyde and caffeyl aldehyde to their respective alcohols. This is Putative cinnamyl alcohol dehydrogenase 4 from Oryza sativa subsp. japonica (Rice).